Reading from the N-terminus, the 533-residue chain is T-complex protein 1 subunit delta (533 aa).

Positions 1–24 (MVVKPAARGMKPQGQAYKDKSKPA) are disordered.

It belongs to the TCP-1 chaperonin family. In terms of assembly, heterooligomeric complex of about 850 to 900 kDa that forms two stacked rings, 12 to 16 nm in diameter.

The protein localises to the cytoplasm. Functionally, molecular chaperone; assists the folding of proteins upon ATP hydrolysis. Known to play a role, in vitro, in the folding of actin and tubulin. This chain is T-complex protein 1 subunit delta, found in Ochlerotatus triseriatus (Eastern treehole mosquito).